The chain runs to 323 residues: Dehydrogenase/reductase SDR family member 7B (323 aa).

At 1–17 (MISPSFRKGMLKERVMD) the chain is on the cytoplasmic side. Residues 18-38 (LASQTTILPLLFGCLGIFSLF) form a helical; Signal-anchor for type II membrane protein membrane-spanning segment. The Lumenal portion of the chain corresponds to 39–323 (RLLQRIRSKA…ARKERKSKSS (285 aa)). The NAD(+) site is built by Ser62 and Leu64. Ser192 lines the substrate pocket. Positions 205, 209, and 240 each coordinate NAD(+). Tyr205 acts as the Proton acceptor in catalysis.

This sequence belongs to the short-chain dehydrogenases/reductases (SDR) family.

The protein localises to the endoplasmic reticulum membrane. In terms of biological role, putative oxidoreductase. This Mus musculus (Mouse) protein is Dehydrogenase/reductase SDR family member 7B.